A 284-amino-acid chain; its full sequence is BES1/BZR1 homolog protein 3 (284 aa).

Disordered regions lie at residues 1–21 (MTSGTRTPTWKERENNKRRER) and 85–116 (GSTSASPCSSYQHSPRASYNPSPSSSSFPSPT). Residues 6–88 (RTPTWKEREN…RMDLMNGSTS (83 aa)) form a required for DNA-binding region. Residues 85 to 97 (GSTSASPCSSYQH) are compositionally biased toward polar residues. Positions 98 to 114 (SPRASYNPSPSSSSFPS) are enriched in low complexity. T153 is modified (phosphothreonine).

It belongs to the BZR/LAT61 family. In terms of processing, phosphorylated. Phosphorylation increases protein degradation.

The polypeptide is BES1/BZR1 homolog protein 3 (BEH3) (Arabidopsis thaliana (Mouse-ear cress)).